The sequence spans 315 residues: Acetaldehyde dehydrogenase 2 (315 aa).

Residue 13–16 coordinates NAD(+); the sequence is SGNI. Cys-131 (acyl-thioester intermediate) is an active-site residue. NAD(+) contacts are provided by residues 162–170 and Asn-290; that span reads SAGPGTRAN.

It belongs to the acetaldehyde dehydrogenase family.

It catalyses the reaction acetaldehyde + NAD(+) + CoA = acetyl-CoA + NADH + H(+). The protein is Acetaldehyde dehydrogenase 2 of Pseudomonas putida (strain W619).